We begin with the raw amino-acid sequence, 87 residues long: U3-theraphotoxin-Hhn1g (87 aa).

Positions 1-24 (MVNMKASMFLTFAGLVLLFVVCFA) are cleaved as a signal peptide. The propeptide occupies 25-52 (SESEEKEFPKEMLSSIFAVDNDFKQEER). 3 disulfides stabilise this stretch: cysteine 54-cysteine 67, cysteine 61-cysteine 72, and cysteine 66-cysteine 79.

This sequence belongs to the neurotoxin 10 (Hwtx-1) family. 51 (Hntx-8) subfamily. Hntx-8 sub-subfamily. Expressed by the venom gland.

It localises to the secreted. Functionally, ion channel inhibitor. The polypeptide is U3-theraphotoxin-Hhn1g (Cyriopagopus hainanus (Chinese bird spider)).